Reading from the N-terminus, the 275-residue chain is Prohibitin-1 (275 aa).

The AIM signature appears at 106-109; that stretch reads YQNL.

It belongs to the prohibitin family. As to quaternary structure, the mitochondrial prohibitin complex consists of two subunits (PHB1 and PHB2). The subunits assemble into a membrane-associated ring-shaped supercomplex of approximately 1 mDa. Interacts with ATG24/SNX4; the interaction is direct and plays a role in mitophagy.

It is found in the mitochondrion inner membrane. In terms of biological role, prohibitin probably acts as a holdase/unfoldase for the stabilization of newly synthesized mitochondrial proteins. Involved in mitophagy. Required for the switch to necrotrophic growth. The chain is Prohibitin-1 from Colletotrichum higginsianum (strain IMI 349063) (Crucifer anthracnose fungus).